Consider the following 293-residue polypeptide: MQLQELHMLVVLAEELNMRKAAERLFVSQPALSQRLQTIEKAWGTKIFLRSQKGLTVTPAGEKIIQFANDVTLEQERIRENIDELEGEIHGTLKLAVASIIGQHWLPKVLKTYVEKYPNAKISLITGWSSEMLKSLYEDQVHIGIIRGNPEWKGRKDYLMTDHLYLVDTEISCIEDIAHTERPFIQFKSDSTYFQEIQHWWHQKFKTSPKQTILVDQIETCKQMALHGIGYAILPSVTLQNEDKVNKMPLLDMKGHPIGRDTWLLGYEPAFELKQVQAFVQVIKDMLDQENPF.

Residues methionine 1–threonine 58 enclose the HTH lysR-type domain. The segment at residues methionine 18–glutamine 37 is a DNA-binding region (H-T-H motif).

This sequence belongs to the LysR transcriptional regulatory family.

This is an uncharacterized protein from Bacillus subtilis (strain 168).